The sequence spans 146 residues: MRLLQLLFRASPATLLLVLCLQLGANKAQDNTRKIIIKDFDIPKSVRPNEEVTATLAVRTELKECMVVKTYLISSVPLEGGFNYKYTACLCNNNPKTFYWDFYTNRTVQIAAVVDVIRELGICPDDAAVIPIKSNRFYTTETLKVE.

Positions 1–28 are cleaved as a signal peptide; sequence MRLLQLLFRASPATLLLVLCLQLGANKA. Gln-29 is subject to Pyrrolidone carboxylic acid. Cystine bridges form between Cys-65/Cys-91 and Cys-89/Cys-123. Asn-105 carries N-linked (GlcNAc...) asparagine glycosylation.

It belongs to the PIP family. Monomer. Interacts with AZGP1.

It localises to the secreted. The chain is Prolactin-inducible protein homolog (PIP) from Hylobates agilis (Agile gibbon).